Here is a 323-residue protein sequence, read N- to C-terminus: Olfactory receptor 1E2 (323 aa).

The Extracellular segment spans residues 1–25 (MMGQNQTSISDFLLLGLPIQPEQQN). N-linked (GlcNAc...) asparagine glycosylation is present at asparagine 5. A helical membrane pass occupies residues 26 to 49 (LCYALFLAMYLTTLLGNLLIIVLI). Topologically, residues 50–57 (RLDSHLHT) are cytoplasmic. The helical transmembrane segment at 58-79 (PVYLFLSNLSFSDLCFSSVTMP) threads the bilayer. The Extracellular segment spans residues 80-100 (KLLQNMQNQDPSIPYADCLTQ). An intrachain disulfide couples cysteine 97 to cysteine 198. The helical transmembrane segment at 101–120 (MYFFLYFSDLESFLLVAMAY) threads the bilayer. Residues 121-148 (DRYVAICFPMHYTAICFLLHYTAIMSPM) lie on the Cytoplasmic side of the membrane. Residues 149–167 (LCLSVVALSWVLTTFHAML) traverse the membrane as a helical segment. Over 168-205 (HTLLMARLCFCADNVIPHFFCDMSALLKLACSDTRVNE) the chain is Extracellular. The helical transmembrane segment at 206–228 (WVIFIMGGLILVIPFLLILGSYA) threads the bilayer. Over 229–245 (RIVSSILKVPSSKGICK) the chain is Cytoplasmic. Residues 246-269 (AFSTCGSHLSVVSLFYGTVIGLYL) form a helical membrane-spanning segment. Residues 270–281 (CPSANSSTLKDT) are Extracellular-facing. Asparagine 274 carries N-linked (GlcNAc...) asparagine glycosylation. The helical transmembrane segment at 282-301 (VMAMMYTVVTPMLTPFIYSL) threads the bilayer. The Cytoplasmic segment spans residues 302–323 (RNRDMKGALERVICKRKNPFLL).

The protein belongs to the G-protein coupled receptor 1 family.

Its subcellular location is the cell membrane. Its function is as follows. Odorant receptor. In Homo sapiens (Human), this protein is Olfactory receptor 1E2 (OR1E2).